Here is a 371-residue protein sequence, read N- to C-terminus: Alginate lyase (371 aa).

The signal sequence occupies residues 1-28 (MRRPMTLFKRISSPALLALALFGGAAHA). Residues 67–68 (SK), 140–141 (HT), and Tyr-258 contribute to the substrate site.

This sequence belongs to the polysaccharide lyase 5 family.

The protein resides in the periplasm. The enzyme catalyses Eliminative cleavage of alginate to give oligosaccharides with 4-deoxy-alpha-L-erythro-hex-4-enuronosyl groups at their non-reducing ends and beta-D-mannuronate at their reducing end.. Functionally, catalyzes the depolymerization of alginate by cleaving the beta-1,4 glycosidic bond between two adjacent sugar residues via a beta-elimination mechanism. May serve to degrade mislocalized alginate that is trapped in the periplasmic space. In Pseudomonas putida (strain ATCC 47054 / DSM 6125 / CFBP 8728 / NCIMB 11950 / KT2440), this protein is Alginate lyase.